Here is a 274-residue protein sequence, read N- to C-terminus: Thymidylate synthase (274 aa).

Residue arginine 21 coordinates dUMP. A (6R)-5,10-methylene-5,6,7,8-tetrahydrofolate-binding site is contributed by histidine 51. 123–124 (RR) contacts dUMP. Cysteine 156 acts as the Nucleophile in catalysis. DUMP is bound by residues 176–179 (RSAD), asparagine 187, and 217–219 (HIY). Aspartate 179 lines the (6R)-5,10-methylene-5,6,7,8-tetrahydrofolate pocket. A (6R)-5,10-methylene-5,6,7,8-tetrahydrofolate-binding site is contributed by serine 273.

It belongs to the thymidylate synthase family. Bacterial-type ThyA subfamily. As to quaternary structure, homodimer.

It is found in the cytoplasm. It carries out the reaction dUMP + (6R)-5,10-methylene-5,6,7,8-tetrahydrofolate = 7,8-dihydrofolate + dTMP. It functions in the pathway pyrimidine metabolism; dTTP biosynthesis. Catalyzes the reductive methylation of 2'-deoxyuridine-5'-monophosphate (dUMP) to 2'-deoxythymidine-5'-monophosphate (dTMP) while utilizing 5,10-methylenetetrahydrofolate (mTHF) as the methyl donor and reductant in the reaction, yielding dihydrofolate (DHF) as a by-product. This enzymatic reaction provides an intracellular de novo source of dTMP, an essential precursor for DNA biosynthesis. This chain is Thymidylate synthase, found in Francisella philomiragia subsp. philomiragia (strain ATCC 25017 / CCUG 19701 / FSC 153 / O#319-036).